The following is an 815-amino-acid chain: Bifunctional purine biosynthetic protein purD (815 aa).

The interval 6–452 (NILVIGSGSR…YRKDIGQKAL (447 aa)) is GARS. The region spanning 113–343 (KDFMARNNIP…LFEIVLACIE (231 aa)) is the ATP-grasp domain. 139–200 (IESLNYKIVL…EEFLDGEECS (62 aa)) serves as a coordination point for ATP. 2 residues coordinate Mg(2+): E313 and N315. The tract at residues 469–801 (VSYSESGVDI…KVYKIGKIIN (333 aa)) is AIRS.

It in the N-terminal section; belongs to the GARS family. This sequence in the C-terminal section; belongs to the AIR synthase family. Mg(2+) serves as cofactor. The cofactor is Mn(2+).

Its subcellular location is the cytoplasm. The protein resides in the cytosol. The enzyme catalyses 5-phospho-beta-D-ribosylamine + glycine + ATP = N(1)-(5-phospho-beta-D-ribosyl)glycinamide + ADP + phosphate + H(+). It catalyses the reaction 2-formamido-N(1)-(5-O-phospho-beta-D-ribosyl)acetamidine + ATP = 5-amino-1-(5-phospho-beta-D-ribosyl)imidazole + ADP + phosphate + H(+). The protein operates within purine metabolism; IMP biosynthesis via de novo pathway; 5-amino-1-(5-phospho-D-ribosyl)imidazole from N(2)-formyl-N(1)-(5-phospho-D-ribosyl)glycinamide: step 2/2. It functions in the pathway purine metabolism; IMP biosynthesis via de novo pathway; N(1)-(5-phospho-D-ribosyl)glycinamide from 5-phospho-alpha-D-ribose 1-diphosphate: step 2/2. In terms of biological role, catalyzes the second and fifth step in the 'de novo' purine biosynthesis pathway; contains phosphoribosylamine--glycine ligase (GARS) and phosphoribosylformylglycinamidine cyclo-ligase (AIRS) activities. The sequence is that of Bifunctional purine biosynthetic protein purD (purD) from Dictyostelium discoideum (Social amoeba).